The primary structure comprises 583 residues: Proteasome-associated ATPase (583 aa).

Residues 2-90 (ASREDRDAAN…REEVDRLAQP (89 aa)) adopt a coiled-coil conformation. 271 to 276 (GCGKTL) lines the ATP pocket. The docks into pockets in the proteasome alpha-ring stretch occupies residues 582-583 (YL).

It belongs to the AAA ATPase family. In terms of assembly, homohexamer. Assembles into a hexameric ring structure that caps the 20S proteasome core. Strongly interacts with the prokaryotic ubiquitin-like protein Pup through a hydrophobic interface; the interacting region of ARC lies in its N-terminal coiled-coil domain. There is one Pup binding site per ARC hexamer ring. Upon ATP-binding, the C-terminus of ARC interacts with the alpha-rings of the proteasome core, possibly by binding to the intersubunit pockets.

The protein operates within protein degradation; proteasomal Pup-dependent pathway. ATPase which is responsible for recognizing, binding, unfolding and translocation of pupylated proteins into the bacterial 20S proteasome core particle. May be essential for opening the gate of the 20S proteasome via an interaction with its C-terminus, thereby allowing substrate entry and access to the site of proteolysis. Thus, the C-termini of the proteasomal ATPase may function like a 'key in a lock' to induce gate opening and therefore regulate proteolysis. The protein is Proteasome-associated ATPase of Acidothermus cellulolyticus (strain ATCC 43068 / DSM 8971 / 11B).